A 585-amino-acid polypeptide reads, in one-letter code: Zinc finger protein C11D3.17 (585 aa).

C2H2-type zinc fingers lie at residues F31–H53 and I59–H82. T553 is subject to Phosphothreonine.

The protein localises to the nucleus. In Schizosaccharomyces pombe (strain 972 / ATCC 24843) (Fission yeast), this protein is Zinc finger protein C11D3.17.